The chain runs to 492 residues: Heat shock factor protein 4 (492 aa).

A DNA-binding region spans residues 17–121 (VPAFLGKLWA…QLLERVRRKV (105 aa)). The tract at residues 129–203 (GRWRPEDLGR…GPLQTGSSGA (75 aa)) is hydrophobic repeat HR-A/B. The tract at residues 245 to 323 (LPETTLGLSS…ECDFCVTAPP (79 aa)) is interactions with DUSP26, MAPK1 and MAPK2. Positions 250–286 (LGLSSSHRTRGPIISDIHEDSPSPDGTRLSPSSGGRR) are disordered. A Glycyl lysine isopeptide (Lys-Gly) (interchain with G-Cter in SUMO) cross-link involves residue Lys294. Ser299 bears the Phosphoserine mark. The disordered stretch occupies residues 337-378 (KGNFSPEGPRNAQQPEPRGPREVPDRGTLGLDRGARSPENLL). Positions 365–390 (LGLDRGARSPENLLPPMLLRAPPESV) are hydrophobic repeat HR-C.

This sequence belongs to the HSF family. As to quaternary structure, homotrimer. Exhibits constitutive DNA binding and forms trimers even in the absence of stress. Interacts with ALKBH4, DUSP26, MAPK1, MAPK2, MAPK8 and MAP kinase p38. Post-translationally, phosphorylated mainly on serine residues. Phosphorylation on Ser-299 promotes sumoylation on Lys-294. Constitutively sumoylated. Sumoylation represses the transcriptional activity and is promoted by phosphorylation on Ser-299.

Its subcellular location is the nucleus. Its function is as follows. Heat-shock transcription factor that specifically binds heat shock promoter elements (HSE). Required for denucleation and organelle rupture and degradation that occur during eye lens terminal differentiation, when fiber cells that compose the lens degrade all membrane-bound organelles in order to provide lens with transparency to allow the passage of light. In this process, may regulate denucleation of lens fiber cells in part by activating DNASE2B transcription. May be involved in DNA repair through the transcriptional regulation of RAD51. May up-regulate p53/TP53 protein in eye lens fiber cells, possibly through protein stabilization. In the eye lens, controls the expression of alpha-crystallin B chain/CRYAB and consequently may be involved in the regulation of lysosomal acidification. The protein is Heat shock factor protein 4 (HSF4) of Canis lupus familiaris (Dog).